Consider the following 163-residue polypeptide: Nucleotide-binding protein GWCH70_0711 (163 aa).

It belongs to the YajQ family.

Its function is as follows. Nucleotide-binding protein. This is Nucleotide-binding protein GWCH70_0711 from Geobacillus sp. (strain WCH70).